We begin with the raw amino-acid sequence, 260 residues long: MAAAHTPREENVYMAKLAEQAERYEEMVEFMEKVSANADSEELTVEERNLLSVAYKNVIGARRASWRIISSIEQKEESRGNEDHVAVIRDYRSKIESELSNICDGILKLLDTRLIPSASSGDSKVFYLKMKGDYHRYLAEFKTGAERKEAAESTLTGYKSAQDIANAELPPTHPIRLGLALNFSVFYYEILNSPDRACNLAKQAFDEAIAELDTLGEESYKDSTLIMQLLRDNLTLWTSDMQDDGADEIKEAAPKADEQQ.

Belongs to the 14-3-3 family.

In Pisum sativum (Garden pea), this protein is 14-3-3-like protein.